The chain runs to 430 residues: Adenylosuccinate synthetase (430 aa).

GTP is bound by residues 12–18 (GDEGKGK) and 40–42 (GHT). Residue aspartate 13 is the Proton acceptor of the active site. Mg(2+)-binding residues include aspartate 13 and glycine 40. Residues 13–16 (DEGK), 38–41 (NAGH), threonine 128, arginine 142, glutamine 223, threonine 238, and arginine 302 each bind IMP. Histidine 41 acts as the Proton donor in catalysis. 298–304 (TTTGRPR) lines the substrate pocket. Residues arginine 304, 330–332 (SID), and 412–414 (SVG) contribute to the GTP site.

This sequence belongs to the adenylosuccinate synthetase family. As to quaternary structure, homodimer. It depends on Mg(2+) as a cofactor.

It localises to the cytoplasm. It carries out the reaction IMP + L-aspartate + GTP = N(6)-(1,2-dicarboxyethyl)-AMP + GDP + phosphate + 2 H(+). It participates in purine metabolism; AMP biosynthesis via de novo pathway; AMP from IMP: step 1/2. In terms of biological role, plays an important role in the de novo pathway of purine nucleotide biosynthesis. Catalyzes the first committed step in the biosynthesis of AMP from IMP. The polypeptide is Adenylosuccinate synthetase (Streptococcus pyogenes serotype M5 (strain Manfredo)).